The primary structure comprises 611 residues: ANK repeat-containing protein nipk-1 (611 aa).

Residues 91 to 149 (NSKSKKKTENQETKEKDEEAEEKKDGPPKDDKELKMKKEKEQEDENAELDEQKKDGDLL) adopt a coiled-coil conformation. 3 disordered regions span residues 92–167 (SKSK…SHPY), 212–255 (ISAS…DTSR), and 280–333 (TKEE…LSPR). Basic and acidic residues predominate over residues 97–131 (KTENQETKEKDEEAEEKKDGPPKDDKELKMKKEKE). Composition is skewed to polar residues over residues 212-223 (ISASTTPDTVLS), 239-255 (ESLQ…DTSR), and 315-333 (GTCS…LSPR). ANK repeat units follow at residues 375 to 405 (DGDT…TMNE), 417 to 446 (FGET…SPNS), 452 to 482 (VGDS…RVNE), 486 to 527 (DGQT…DPTI), and 532 to 561 (TGKT…EDTF).

This sequence belongs to the iASPP family. In terms of tissue distribution, expressed in the nervous system.

Acts downstream of the receptor complex composed of ilcr-1 and ilcr-2, which is a signaling complex that modulates neuronal activity and animal behavior in response to sensory neuron input. Mediates signaling of the complex. In Caenorhabditis elegans, this protein is ANK repeat-containing protein nipk-1.